We begin with the raw amino-acid sequence, 709 residues long: Golgin-84 (709 aa).

The Cytoplasmic portion of the chain corresponds to 1-664 (MASWLKVAED…RATRFLWRHP (664 aa)). 3 disordered regions span residues 24-132 (TELS…VVDR), 144-195 (EVEV…NQDA), and 211-265 (EVIH…DQLE). Low complexity predominate over residues 29–43 (EQSSPQPSGSSSQEG). The span at 78-89 (PPRERIKIEKIR) shows a compositional bias: basic and acidic residues. Positions 94 to 113 (VDSSSVDASASKPDVSSSDV) are enriched in low complexity. A compositionally biased stretch (basic and acidic residues) spans 114-132 (KGLDDDGGAEKEEKVVVDR). Low complexity predominate over residues 162 to 180 (DGAADSGNSEGAAESSAPS). 2 stretches are compositionally biased toward basic and acidic residues: residues 211-222 (EVIHEKNIKEVP) and 248-265 (QQEHKLDSGSVKDQDQLE). Residues 287 to 592 (RVCAGLSSRL…AALEFQLEKS (306 aa)) adopt a coiled-coil conformation. Residues 665 to 684 (VARVSLLFYLVFVHLFLMYL) traverse the membrane as a helical; Signal-anchor for type II membrane protein segment. The Lumenal portion of the chain corresponds to 685-707 (MHRLQDFASREGPTAMGGLANSD).

Its subcellular location is the golgi apparatus membrane. May be involved in maintaining Golgi structure and in intra-Golgi transport. The polypeptide is Golgin-84 (Oryza sativa subsp. japonica (Rice)).